A 105-amino-acid polypeptide reads, in one-letter code: Large ribosomal subunit protein bL21 (105 aa).

This sequence belongs to the bacterial ribosomal protein bL21 family. Part of the 50S ribosomal subunit. Contacts protein L20.

Functionally, this protein binds to 23S rRNA in the presence of protein L20. The chain is Large ribosomal subunit protein bL21 from Rickettsia africae (strain ESF-5).